The sequence spans 321 residues: ATP-dependent 6-phosphofructokinase (321 aa).

ATP is bound at residue Gly-12. ADP is bound by residues 22-26 (RGVVR) and 55-60 (RYSVSD). ATP contacts are provided by residues 73-74 (RF) and 103-106 (GDGS). Residue Asp-104 participates in Mg(2+) binding. A substrate-binding site is contributed by 127-129 (TID). Asp-129 serves as the catalytic Proton acceptor. Arg-156 is a binding site for ADP. Residues Arg-164 and 171-173 (MGR) each bind substrate. Residues 187–189 (GCE) and 215–217 (KRH) each bind ADP. Substrate-binding positions include Glu-224, Arg-245, and 251–254 (HVQR).

This sequence belongs to the phosphofructokinase type A (PFKA) family. ATP-dependent PFK group I subfamily. Prokaryotic clade 'B1' sub-subfamily. Homotetramer. Mg(2+) is required as a cofactor.

Its subcellular location is the cytoplasm. The catalysed reaction is beta-D-fructose 6-phosphate + ATP = beta-D-fructose 1,6-bisphosphate + ADP + H(+). Its pathway is carbohydrate degradation; glycolysis; D-glyceraldehyde 3-phosphate and glycerone phosphate from D-glucose: step 3/4. Allosterically activated by ADP and other diphosphonucleosides, and allosterically inhibited by phosphoenolpyruvate. Catalyzes the phosphorylation of D-fructose 6-phosphate to fructose 1,6-bisphosphate by ATP, the first committing step of glycolysis. The polypeptide is ATP-dependent 6-phosphofructokinase (Mannheimia succiniciproducens (strain KCTC 0769BP / MBEL55E)).